The sequence spans 91 residues: Small ribosomal subunit protein bS6 (91 aa).

Belongs to the bacterial ribosomal protein bS6 family.

Its function is as follows. Binds together with bS18 to 16S ribosomal RNA. The chain is Small ribosomal subunit protein bS6 from Leptospira biflexa serovar Patoc (strain Patoc 1 / Ames).